The sequence spans 229 residues: Echinolectin 1 (229 aa).

Asn94 is a glycosylation site (N-linked (GlcNAc...) asparagine).

It is found in the secreted. The protein is Echinolectin 1 of Echinometra lucunter (Rock-boring urchin).